A 507-amino-acid chain; its full sequence is MDVHIDNQVLSGLGTPLLVHLFVPDTVMAELCPNRVPNCEGAWCQTLFSDRTGLTRVCRVFAARGMLPGRPSHRGTFTSVPVYCDEGLPELYNPFHVAALRFYDEGGLVGELQIYYLSLFEGAKRALTDGHLIREASGVQESAAAMQPIPIDPGPPGGAGIEHMPVAAAQVEHPKTYDLKQILLEITQEENRGEQRLGHAGSPALCLGLRLRAGAETKAAAETSVSKHHPALENPSNIRGSAGGEGGGGRAGTGGTVGVGSGALSRVPVSFSKTRRAIRESRALVRGIAHIFSPHALYVVTYPELSAQGRLHRMTAVTHASPATDLAEVSILGAPEREFRFLISVALRISASFREKLAMQAWTAQQEIPVVIPTSYSRIYKNSDLIREAFFTVQTRVSWESCWVKATISNAPKTPDACLWIDSHPLYEEGASAWGKVIDSRPPGGLVGAASQLVALGTDGHCVHLATTSDGQAFLVLPGGFVIKGQLALTPEERGYILARHGIRREQ.

The segment at 219-257 (AAAETSVSKHHPALENPSNIRGSAGGEGGGGRAGTGGTV) is disordered. Residues 241–257 (SAGGEGGGGRAGTGGTV) show a composition bias toward gly residues.

The protein belongs to the herpesviridae CVC1 protein family. As to quaternary structure, interacts (via C-terminus) with capsid vertex component 2/CVC2.

It is found in the virion. The protein localises to the host nucleus. Its function is as follows. Capsid vertex-specific component that plays a role during viral DNA encapsidation, assuring correct genome cleavage and presumably stabilizing capsids that contain full-length viral genomes. The protein is Capsid vertex component 1 of Epstein-Barr virus (strain B95-8) (HHV-4).